Reading from the N-terminus, the 352-residue chain is Putative GATA transcription factor 22 (352 aa).

A disordered region spans residues 27–53; sequence SLHHHLQQQQQQQQHFHHQASSNPSSL. A compositionally biased stretch (low complexity) spans 33 to 53; it reads QQQQQQQQHFHHQASSNPSSL. The short motif at 112–119 is the Nuclear localization signal element; the sequence is PKKETRLK. Residues 163-189 are disordered; the sequence is AIITTSDSSKQHTNNDQSSNLSNSERQ. Polar residues predominate over residues 165 to 189; the sequence is ITTSDSSKQHTNNDQSSNLSNSERQ. The GATA-type zinc finger occupies 195–249; the sequence is DCVIRICSDCNTTKTPLWRSGPRGPKSLCNACGIRQRKARRAAMATATATAVSGV.

This sequence belongs to the type IV zinc-finger family. Class B subfamily. As to quaternary structure, forms heterodimers with GATA18. As to expression, expressed predominantly in leaves, and barely in stems, flowers and siliques.

The protein resides in the nucleus. Transcriptional regulator that specifically binds 5'-GATA-3' or 5'-GAT-3' motifs within gene promoters. Involved in the modulation of chloroplast development, growth and division in a cytokinin-dependent manner. Repressor of the gibberellic acid (GA) signaling pathway that regulates flowering and modulates greening, in a SOC1-dependent manner. Prevents the accumulation of SOC1 during flowering. Promotes chlorophyll biosynthesis throughout the plant, by regulating chlorophyll biosynthetic genes (e.g. HEMA1 and GUN4) and chloroplast localized glutamate synthase (e.g. GLU1). Involved in the regulation of sugar-sensing genes (e.g. HXK1, HXK2, STP13 and PLT6). Regulator of germination, senescence, elongation growth and flowering time. Influences also leaf starch content. This Arabidopsis thaliana (Mouse-ear cress) protein is Putative GATA transcription factor 22.